The sequence spans 367 residues: Cyclin-dependent kinase 5 activator 2 (367 aa).

Residues 1-11 (MGTVLSLSPAS) are compositionally biased toward polar residues. Disordered stretches follow at residues 1–56 (MGTV…RLKR), 72–98 (ASAKKKKGSKKVTPKPASTGPDPLVQQ), 131–175 (AAAT…GSPR), and 329–367 (GEAAASGGGPPSGGAPAASSAARDSCAAGTKHWTMNLDR). A lipid anchor (N-myristoyl glycine) is attached at glycine 2. Positions 74–84 (AKKKKGSKKVT) are enriched in basic residues. Threonine 84 is modified (phosphothreonine). Positions 131–148 (AAATCEPPSGGSAAAQPP) are enriched in low complexity. Residues 154 to 171 (KPPPPPPPAPQVAPPVPG) show a composition bias toward pro residues. Low complexity predominate over residues 342 to 357 (GAPAASSAARDSCAAG).

The protein belongs to the cyclin-dependent kinase 5 activator family. Heterodimer of a catalytic subunit and a regulatory subunit. Post-translationally, myristoylated. The Gly-2-Ala mutant is absent of the cell periphery, suggesting that a proper myristoylation signal is essential for the proper distribution of CDK5R2 (p39). In terms of tissue distribution, brain and neuron specific.

The protein resides in the cell membrane. Functionally, activator of CDK5/TPKII. The protein is Cyclin-dependent kinase 5 activator 2 (CDK5R2) of Homo sapiens (Human).